The primary structure comprises 398 residues: Argininosuccinate synthase (398 aa).

8 to 16 (AYSGGLDTT) provides a ligand contact to ATP. Tyr-87 is an L-citrulline binding site. Residue Gly-117 participates in ATP binding. L-aspartate is bound by residues Thr-119, Asn-123, and Asp-124. Residue Asn-123 participates in L-citrulline binding. L-citrulline-binding residues include Arg-127, Ser-175, Glu-259, and Tyr-271.

Belongs to the argininosuccinate synthase family. Type 1 subfamily. As to quaternary structure, homotetramer.

The protein resides in the cytoplasm. The enzyme catalyses L-citrulline + L-aspartate + ATP = 2-(N(omega)-L-arginino)succinate + AMP + diphosphate + H(+). It functions in the pathway amino-acid biosynthesis; L-arginine biosynthesis; L-arginine from L-ornithine and carbamoyl phosphate: step 2/3. The polypeptide is Argininosuccinate synthase (Corynebacterium jeikeium (strain K411)).